The sequence spans 247 residues: Ribonuclease 3 (247 aa).

An RNase III domain is found at 21–149; the sequence is FKKLSKKIGI…LVGAIYLDRG (129 aa). Glu-62 serves as a coordination point for Mg(2+). The active site involves Asp-66. Positions 135 and 138 each coordinate Mg(2+). The active site involves Glu-138. Positions 176–245 constitute a DRBM domain; that stretch reads DYKTQLQEYS…AKELYIRIRR (70 aa).

It belongs to the ribonuclease III family. In terms of assembly, homodimer. Mg(2+) serves as cofactor.

The protein localises to the cytoplasm. The enzyme catalyses Endonucleolytic cleavage to 5'-phosphomonoester.. In terms of biological role, digests double-stranded RNA. Involved in the processing of primary rRNA transcript to yield the immediate precursors to the large and small rRNAs (23S and 16S). Processes some mRNAs, and tRNAs when they are encoded in the rRNA operon. Processes pre-crRNA and tracrRNA of type II CRISPR loci if present in the organism. This Leptospira borgpetersenii serovar Hardjo-bovis (strain L550) protein is Ribonuclease 3.